The sequence spans 103 residues: Small ribosomal subunit protein uS10 (103 aa).

Belongs to the universal ribosomal protein uS10 family. As to quaternary structure, part of the 30S ribosomal subunit.

Functionally, involved in the binding of tRNA to the ribosomes. This chain is Small ribosomal subunit protein uS10, found in Azoarcus sp. (strain BH72).